The following is a 383-amino-acid chain: Na(+)/H(+) antiporter NhaA (383 aa).

11 consecutive transmembrane segments (helical) span residues 10 to 30 (LIGGLILFSAALLAIVVNNSP), 56 to 76 (LMHWINDGLMAIYFLYIGLEI), 91 to 111 (IITPAIAAFAGLAMPSLIYLS), 121 to 141 (GWAIPSATDIAFTLGILALLG), 150 to 170 (LLVITIAIFDDIAAIAIIAIF), 174 to 194 (SLSLLSLSLGTLFILAMIICN), 206 to 226 (VVLGFFAWFCTIKSGVHATLA), 254 to 274 (PWIIYFILPVFAFANAGISFS), 275 to 295 (GISFSILFEPITLGIILGLFV), 327 to 347 (GISLLCGIGFTMSLFIGVLAF), and 355 to 375 (AIKIGVVVGSVLSGFFGYIVL).

This sequence belongs to the NhaA Na(+)/H(+) (TC 2.A.33) antiporter family.

The protein localises to the cell inner membrane. It catalyses the reaction Na(+)(in) + 2 H(+)(out) = Na(+)(out) + 2 H(+)(in). Na(+)/H(+) antiporter that extrudes sodium in exchange for external protons. This Francisella tularensis subsp. novicida (strain U112) protein is Na(+)/H(+) antiporter NhaA.